We begin with the raw amino-acid sequence, 778 residues long: MSSDWDEIKRLAADFQKAQLTSTLQKLSERNCIEIVTLLLEKQLLDVVFTNDGKEYITPDHLEREIQDELYANGGRANLVEVSKTLNVDLSRIVTLAERIAAENPHIHLLLGQLIDEDYITHIAQEINEKLAQHGEISISDLTSQFDLPSDFLQQNVVEKHLGKIIKGRQDASNPRVFFTQAYIQRCKAKIRGALAAITKPTNVAVILQQINVQEKIFHSLLDEISPAGQVTSKQANAQYVPHIYAKTQADWVNSFYKQNSFLEYEAINKLGISDAKTYIRNQFPNEQFLFLKRVALGARLIELTVVSALNECSATKHYLDLSTILPSNLSEEDIAEAFDAVIAQKHCNPSHFVYLESIVFSQAYLTELVQPCHDMALALAKSAIDNGVYQQYIVEKTLAQKGNNLSTSHDADDDSKTDKRDERRRKAASGKAGGGAQGRETKTKSTKKHQRGRAAAHNHDSEDEEDTVQQSAGNTRKSVKALELVKSSDIINLIKITLEEEGLEHLAKPIAALYLNQLNQVALSKAQELYEATPQTNRRQTHAAIQERVNMLLVDIRLYEKGLKLFHADTQTQLVKYLLKSLGNEICNELTLYVAAECSLSVKSTNLNVDQRIKLIQELDAQYRNALLEQNKALNRSIEDFELATESVLKACSMIIKKADKKKDRALIIGHKEKLLQQLLECHEPALLLHLAALILFTTITGCILHASGKFVSAILQHIRASLNEPQNALYLVLQMLQQATPDSAESKSINEQLQSLQAEVVDLAQNYSRASVSKAD.

The interval 404-477 (NNLSTSHDAD…TVQQSAGNTR (74 aa)) is disordered. The segment covering 445–457 (KSTKKHQRGRAAA) has biased composition (basic residues).

This sequence belongs to the UFL1 family.

E3 UFM1-protein ligase that mediates ufmylation of target proteins. This is E3 UFM1-protein ligase 1 homolog from Drosophila virilis (Fruit fly).